The following is a 300-amino-acid chain: Cutinase est2 (300 aa).

Residues 1–39 (MSVTTPRRETSLLSRALRATAAAATAVVATVALAAPAQA) form the signal peptide. A poly(ethylene terephthalate)-binding site is contributed by tyrosine 99. Residue serine 169 is the Nucleophile of the active site. Residues methionine 170 and tryptophan 194 each contribute to the poly(ethylene terephthalate) site. Glutamate 213 provides a ligand contact to Ca(2+). Aspartate 215 acts as the Charge relay system in catalysis. Aspartate 243 contacts Ca(2+). Histidine 247 serves as the catalytic Charge relay system. Cysteines 280 and 298 form a disulfide. Glutamate 292 is a Ca(2+) binding site.

The protein belongs to the AB hydrolase superfamily. Monomer. It depends on Ca(2+) as a cofactor.

The protein localises to the secreted. It is found in the periplasm. It catalyses the reaction an acetyl ester + H2O = an aliphatic alcohol + acetate + H(+). It carries out the reaction (ethylene terephthalate)(n) + H2O = (ethylene terephthalate)(n-1) + 4-[(2-hydroxyethoxy)carbonyl]benzoate + H(+). The catalysed reaction is a butanoate ester + H2O = an aliphatic alcohol + butanoate + H(+). The enzyme catalyses cutin + H2O = cutin monomers.. It catalyses the reaction a hexanoate ester + H2O = an aliphatic alcohol + hexanoate + H(+). It carries out the reaction an octanoate ester + H2O = an aliphatic alcohol + octanoate + H(+). Activated by calcium ions. Activated by magnesium ions. Activated by manganese ions. Inhibited by the serine hydrolase inhibitor phenylmethanesulfonyl fluoride (PMSF). Inhibited by the chelator ethylenediaminetetraacetic acid (EDTA). Inhibited by iron ions. Inhibited by aluminum ions. Inhibited by rubidium ions. Inhibited by lithium ions. Functionally, catalyzes the hydrolysis of cutin, a polyester that forms the structure of plant cuticle. Shows esterase activity towards p-nitrophenol-linked aliphatic esters (pNP-aliphatic esters). Capable of degrading the plastic poly(ethylene terephthalate) (PET), the most abundant polyester plastic in the world. Can also depolymerize the synthetic polyesters poly(epsilon-caprolactone) (PCL), poly(butylene succinate-co-adipate) (PBSA), poly(butylene succinate) (PBS), and poly(lactic acid) (PLA). The protein is Cutinase est2 of Thermobifida alba (Thermomonospora alba).